Reading from the N-terminus, the 390-residue chain is Endothelial cell-selective adhesion molecule (390 aa).

The N-terminal stretch at 1–29 (MISLPGPLVTNLLRFLFLGLSALAPPSRA) is a signal peptide. One can recognise an Ig-like V-type domain in the interval 30–143 (ELQLHLPANQ…NGQASGHSIK (114 aa)). Residues 30 to 248 (ELQLHLPANQ…LEVSTGPGAA (219 aa)) lie on the Extracellular side of the membrane. N-linked (GlcNAc...) asparagine glycosylation is found at Asn108, Asn169, Asn213, and Asn236. The Ig-like C2-type domain maps to 156-242 (PSCRLQGVPR…AQCNVTLEVS (87 aa)). Cys174 and Cys224 form a disulfide bridge. The chain crosses the membrane as a helical span at residues 249–269 (VVAGAVVGTLVGLGLLAGLVL). The Cytoplasmic segment spans residues 270–390 (LYHRRGKALE…PAQSQAGSLV (121 aa)). A Phosphoserine modification is found at Ser301. Residues 316 to 365 (ARALRPPHGPPRPGALTPTPSLSSQALPSPRLPTTDGANPQPISLIPGGV) are disordered. Thr332 and Thr334 each carry phosphothreonine. The span at 333–342 (PTPSLSSQAL) shows a compositional bias: polar residues. Phosphoserine is present on residues Ser336, Ser339, Ser344, and Ser371.

In terms of assembly, interacts with MAGI1.

The protein resides in the cell junction. Its subcellular location is the adherens junction. It localises to the tight junction. The protein localises to the cell membrane. In terms of biological role, can mediate aggregation most likely through a homophilic molecular interaction. The protein is Endothelial cell-selective adhesion molecule (ESAM) of Macaca fascicularis (Crab-eating macaque).